The primary structure comprises 371 residues: MSLEPFKQSEALTFGVELELQLVNRHDYDLAPFAPDLLRALKGAEHAGDIKPEISPSMIEISTGICHSYQQALEELTVMRDLMVAASRSLNLGIAGGGTHPFQQWSDRTISDSPRYQYISELYGYLAKQFTVFGQHVHIGCPSADESLFLLHAIGRYVPHFVALAASSPYVQGVDTGFASARLNSVAAFPMSGRAPFLLTWDAFTAYFEKMRNTGVIESMKDFYWDIRPKPEFGTIEVRVMDTPLTVQRACDIAAYIQMLARYLLLSRPFMPQEDDYLVYTFNRFQACRFGLEGEYVHPNELTRMPIADHILSICDALVPHAEALGSLPALANIRALAERRDGDAHWLRQVDAEARSQRETVRKACDQWAA.

Belongs to the glutamate--cysteine ligase type 2 family. YbdK subfamily.

The enzyme catalyses L-cysteine + L-glutamate + ATP = gamma-L-glutamyl-L-cysteine + ADP + phosphate + H(+). Its function is as follows. ATP-dependent carboxylate-amine ligase which exhibits weak glutamate--cysteine ligase activity. This is Putative glutamate--cysteine ligase 2 from Cupriavidus taiwanensis (strain DSM 17343 / BCRC 17206 / CCUG 44338 / CIP 107171 / LMG 19424 / R1) (Ralstonia taiwanensis (strain LMG 19424)).